Here is a 361-residue protein sequence, read N- to C-terminus: tRNA/tmRNA (uracil-C(5))-methyltransferase (361 aa).

S-adenosyl-L-methionine-binding residues include glutamine 185, tyrosine 213, asparagine 218, glutamate 234, and aspartate 294. Residue cysteine 319 is the Nucleophile of the active site. Glutamate 353 serves as the catalytic Proton acceptor.

It belongs to the class I-like SAM-binding methyltransferase superfamily. RNA M5U methyltransferase family. TrmA subfamily.

It catalyses the reaction uridine(54) in tRNA + S-adenosyl-L-methionine = 5-methyluridine(54) in tRNA + S-adenosyl-L-homocysteine + H(+). The catalysed reaction is uridine(341) in tmRNA + S-adenosyl-L-methionine = 5-methyluridine(341) in tmRNA + S-adenosyl-L-homocysteine + H(+). Dual-specificity methyltransferase that catalyzes the formation of 5-methyluridine at position 54 (m5U54) in all tRNAs, and that of position 341 (m5U341) in tmRNA (transfer-mRNA). This is tRNA/tmRNA (uracil-C(5))-methyltransferase from Azotobacter vinelandii (strain DJ / ATCC BAA-1303).